The primary structure comprises 428 residues: Beta-1,3-galactosyl-O-glycosyl-glycoprotein beta-1,6-N-acetylglucosaminyltransferase 4 (428 aa).

Over 1–12 (MRRCAVLHRLRC) the chain is Cytoplasmic. The chain crosses the membrane as a helical; Signal-anchor for type II membrane protein span at residues 13 to 30 (KFYVFVVSLFVVVKLVYL). At 31–428 (KISMDNSIYI…QLQQCLRRVS (398 aa)) the chain is on the lumenal side. A glycan (N-linked (GlcNAc...) asparagine) is linked at Asn-59. Disulfide bonds link Cys-60–Cys-214, Cys-148–Cys-369, Cys-169–Cys-196, and Cys-378–Cys-410.

The protein belongs to the glycosyltransferase 14 family.

Its subcellular location is the golgi apparatus membrane. It catalyses the reaction a 3-O-[beta-D-galactosyl-(1-&gt;3)-N-acetyl-alpha-D-galactosaminyl]-L-seryl-[protein] + UDP-N-acetyl-alpha-D-glucosamine = 3-O-{beta-D-galactosyl-(1-&gt;3)-[N-acetyl-beta-D-glucosaminyl-(1-&gt;6)]-N-acetyl-alpha-D-galactosaminyl}-L-seryl-[protein] + UDP + H(+). The catalysed reaction is a 3-O-[beta-D-galactosyl-(1-&gt;3)-N-acetyl-alpha-D-galactosaminyl]-L-threonyl-[protein] + UDP-N-acetyl-alpha-D-glucosamine = a 3-O-{beta-D-galactosyl-(1-&gt;3)-[N-acetyl-beta-D-glucosaminyl-(1-&gt;6)]-N-acetyl-alpha-D-galactosaminyl}-L-threonyl-[protein] + UDP + H(+). It participates in protein modification; protein glycosylation. Functionally, glycosyltransferase that mediates core 2 O-glycan branching, an important step in mucin-type biosynthesis. In Danio rerio (Zebrafish), this protein is Beta-1,3-galactosyl-O-glycosyl-glycoprotein beta-1,6-N-acetylglucosaminyltransferase 4 (gcnt4).